The sequence spans 728 residues: MDDASVLKYLQENPKLVEDFVVSNEISPETFKRWAVRRTMKYKNVKNGTSGGTGAWTEPDLSMKRRVILETSDNRTRILYEITQCCGQLIGTNSIELIVQNDEGAFSCRKTENGELKLKKVKTSKSADYIQTIVNAGNQTIAEIHFYTQLDSTEKSIVNAVCTWAAATNYYSELYTHKQEGSDGQDIHENIAKQRKLSNFLLDVARSIFHDIVSMDAVIIKVMNFAQKLVDADRASLFLVDSKNAQIYARIFDVGTGDEEHVRVNSEGQKEIRFDMSKGIAGYVASTGEGLNIENAYEDERFNADVDSKTGYTTKTILCMPILIRGIVIGVVQMVNKHDGVFTRQDEDAFEIFAVYCGLALHHAKLYDKIRRSEQKYRVALEVLAYHSVCNADEVNKLKKIEINNRIVELETIDFNGMRLSELEKPLYAVYMFKTLFADTLRFDTEDLIRFVLTVRKNYRRVAYHNWAHGWSVAHAMFATLMNSPDAFTKLEALALYVSCLCHDLDHRGKNNAYMKTMSTPLASIYSTSVMERHHFNQTVTILQQDGHNILKSLSSEDYKKTLSLIKHCILATDLALFFSNKAKLNVILDNNTFDINRQEHRLLTQAVMMTGCDLVASAKPWNIQTETVKVIFEEFYDQGDAERLSGKEPIPMMDRQQAHMLPQMQVGFMRGICMPCYDLIARIFPKNDKMRERCEYNAKKWEELAEEQRKKQEALAQQNGEANETQE.

One can recognise a GAF domain in the interval 214–371; sequence SMDAVIIKVM…HHAKLYDKIR (158 aa). One can recognise a PDEase domain in the interval 390–709; it reads CNADEVNKLK…KKWEELAEEQ (320 aa). His465 acts as the Proton donor in catalysis. His469, His503, Asp504, and Asp614 together coordinate a divalent metal cation. Residues 691 to 728 adopt a coiled-coil conformation; sequence MRERCEYNAKKWEELAEEQRKKQEALAQQNGEANETQE. A disordered region spans residues 708–728; sequence EQRKKQEALAQQNGEANETQE. The segment covering 716 to 728 has biased composition (polar residues); it reads LAQQNGEANETQE.

It belongs to the cyclic nucleotide phosphodiesterase family. It depends on a divalent metal cation as a cofactor.

It catalyses the reaction a nucleoside 3',5'-cyclic phosphate + H2O = a nucleoside 5'-phosphate + H(+). Redundantly with pde-1, plays a role in the AFD thermosensory neurons to regulate microvilli receptive ending morphology, possibly by regulating cGMP levels. In Caenorhabditis elegans, this protein is Probable 3',5'-cyclic phosphodiesterase pde-5 (pde-5).